Reading from the N-terminus, the 689-residue chain is DNA-directed RNA polymerase subunit beta' (689 aa).

Zn(2+) is bound by residues C69, C71, C87, and C90. The Mg(2+) site is built by D489, D491, and D493.

This sequence belongs to the RNA polymerase beta' chain family. RpoC1 subfamily. As to quaternary structure, in plastids the minimal PEP RNA polymerase catalytic core is composed of four subunits: alpha, beta, beta', and beta''. When a (nuclear-encoded) sigma factor is associated with the core the holoenzyme is formed, which can initiate transcription. Requires Mg(2+) as cofactor. Zn(2+) is required as a cofactor.

The protein resides in the plastid. It localises to the chloroplast. The catalysed reaction is RNA(n) + a ribonucleoside 5'-triphosphate = RNA(n+1) + diphosphate. In terms of biological role, DNA-dependent RNA polymerase catalyzes the transcription of DNA into RNA using the four ribonucleoside triphosphates as substrates. This chain is DNA-directed RNA polymerase subunit beta', found in Helianthus annuus (Common sunflower).